The chain runs to 292 residues: Golgi to ER traffic protein 2 (292 aa).

Residues 1–18 show a composition bias toward basic and acidic residues; the sequence is MSELSAEEKRKLLRERRQ. The disordered stretch occupies residues 1-80; the sequence is MSELSAEEKR…TPLHDDPEVP (80 aa). The Cytoplasmic segment spans residues 1–158; the sequence is MSELSAEEKR…SQYHAYEQKQ (158 aa). Composition is skewed to polar residues over residues 29–47 and 55–71; these read RLNN…NVTS and ATTT…QSPT. A helical membrane pass occupies residues 159–179; the sequence is WKARFLVVRWIIHTLNFVYHY. The Lumenal segment spans residues 180-205; sequence IASGYKLSASPYAFVRAQAVDSHVRT. The chain crosses the membrane as a helical span at residues 206-225; that stretch reads FFTAFLTVEVAVISAYFLVM. Over 226-268 the chain is Cytoplasmic; sequence SQPKFKDFSRENLVSRILSMASAVVPAVGRYQPLVTRALVYWN. The helical transmembrane segment at 269–289 threads the bilayer; the sequence is GASIFVGDLMLMVFYFGITSV. The Lumenal segment spans residues 290 to 292; that stretch reads LGN.

This sequence belongs to the GET2 family. Component of the Golgi to ER traffic (GET) complex, which is composed of GET1, GET2 and GET3. Within the complex, GET1 and GET2 form a heterotetramer which is stabilized by phosphatidylinositol binding and which binds to the GET3 homodimer.

Its subcellular location is the endoplasmic reticulum membrane. It is found in the golgi apparatus membrane. Its function is as follows. Required for the post-translational delivery of tail-anchored (TA) proteins to the endoplasmic reticulum. Together with GET1, acts as a membrane receptor for soluble GET3, which recognizes and selectively binds the transmembrane domain of TA proteins in the cytosol. The GET complex cooperates with the HDEL receptor ERD2 to mediate the ATP-dependent retrieval of resident ER proteins that contain a C-terminal H-D-E-L retention signal from the Golgi to the ER. In Clavispora lusitaniae (strain ATCC 42720) (Yeast), this protein is Golgi to ER traffic protein 2.